The sequence spans 267 residues: Probable membrane transporter protein MJ0441 (267 aa).

Helical transmembrane passes span 10–30 (LLLL…GSLF), 31–51 (GIGG…YFGI), 55–75 (VKFA…ISIF), 87–107 (ASIT…FLVV), 158–178 (FLSG…LAMA), 185–205 (AVAI…ISYL), and 213–233 (IYNI…PIIY).

It belongs to the 4-toluene sulfonate uptake permease (TSUP) (TC 2.A.102) family.

The protein localises to the cell membrane. The polypeptide is Probable membrane transporter protein MJ0441 (Methanocaldococcus jannaschii (strain ATCC 43067 / DSM 2661 / JAL-1 / JCM 10045 / NBRC 100440) (Methanococcus jannaschii)).